A 957-amino-acid chain; its full sequence is Serine-aspartate repeat-containing protein C (957 aa).

An N-terminal signal peptide occupies residues 1 to 50 (MNNKKTVTNRKGMIPNRLNKFSIRKYSVGTASILVGTTLIFGLSGHEAKA). The interval 51-166 (AEHTNGELNQ…TPKTTTIKPR (116 aa)) is disordered. The ligand binding A region stretch occupies residues 51-495 (AEHTNGELNQ…GSSTANGDQK (445 aa)). Over residues 56–71 (GELNQSKNETTAPSEN) the composition is skewed to polar residues. Residues 72 to 83 (KTTEKVDSRQLK) show a composition bias toward basic and acidic residues. Polar residues predominate over residues 84–114 (DNTQTATADQPKVTMSDSATVKETSSNMQSP). The segment covering 115 to 132 (QNATASQSTTQTSNVTTN) has biased composition (low complexity). The span at 133 to 164 (DKSSTTYSNETDKSNLTQAKDVSATPKTTTIK) shows a compositional bias: polar residues. CNA-B domains follow at residues 496-606 (KYNL…YKTP) and 607-717 (KYSL…EEET). The segment at 678–937 (TQTGTNTTED…NNSNNGTLFG (260 aa)) is disordered. 2 stretches are compositionally biased toward acidic residues: residues 685-695 (TEDDKDADGGE) and 712-896 (YYEE…DSDS). Residues 920–924 (LPETG) carry the LPXTG sorting signal motif. Residues 922–937 (ETGSENNNSNNGTLFG) show a composition bias toward low complexity. Pentaglycyl murein peptidoglycan amidated threonine is present on threonine 923. Residues 924-957 (GSENNNSNNGTLFGGLFAALGSLLLFGRRKKQNK) constitute a propeptide, removed by sortase.

This sequence belongs to the serine-aspartate repeat-containing protein (SDr) family. In terms of assembly, homodimerizes; via N2-Domain. Interacts with host NRXN1; this interaction mediates bacterial attachment to host cells.

Its subcellular location is the secreted. The protein localises to the cell wall. Its function is as follows. Cell surface-associated calcium-binding protein which plays an important role in adhesion and pathogenesis. Mediates interactions with components of the extracellular matrix such as host NRXN1 to promote bacterial adhesion. The protein is Serine-aspartate repeat-containing protein C (sdrC) of Staphylococcus aureus (strain MSSA476).